Here is a 554-residue protein sequence, read N- to C-terminus: Hyaluronan synthase 3 (554 aa).

Residues 1–15 (MPVQLTTALRVVGTS) are Cytoplasmic-facing. The chain crosses the membrane as a helical span at residues 16 to 36 (LFALVVLGGILAAYVTGYQFI). Over 37 to 44 (HTEKHYLS) the chain is Extracellular. A helical membrane pass occupies residues 45 to 65 (FGLYGAILGLHLLIQSLFAFL). The Cytoplasmic segment spans residues 66-378 (EHRRMRRAGR…NSLWFHKHHL (313 aa)). Residues 379 to 399 (WMTYESVVTGFFPFFLIATVI) traverse the membrane as a helical segment. The Extracellular portion of the chain corresponds to 400-409 (QLFYRGRIWN). Residues 410 to 430 (ILLFLLTVQLVGIIKATYACF) form a helical membrane-spanning segment. Residues 431 to 441 (LRGNAEMIFMS) lie on the Cytoplasmic side of the membrane. The chain crosses the membrane as a helical span at residues 442-462 (LYSLLYMSSLLPAKIFAIATI). The N-linked (GlcNAc...) asparagine glycan is linked to N463. The Extracellular segment spans residues 463–474 (NKSGWGTSGRKT). Residues 475 to 495 (IVVNFIGLIPVSIWVAVLLGG) traverse the membrane as a helical segment. At 496–516 (LAYTAYCQDLFSETELAFLVS) the chain is on the cytoplasmic side. A helical membrane pass occupies residues 517 to 537 (GAILYGCYWVALLMLYLAIIA). Topologically, residues 538–554 (RRCGKKPEQYSLAFAEV) are extracellular.

The protein belongs to the NodC/HAS family. It depends on Mg(2+) as a cofactor. O-GlcNAcylation increases the hyaluronan synthase activity, HAS3 stability and its plasma membrane residence. The concentration of UDP-GlcNAc controls the level of O-GlcNAc modification.

The protein resides in the cell membrane. It is found in the golgi apparatus membrane. Its subcellular location is the golgi apparatus. It localises to the trans-Golgi network membrane. The protein localises to the cytoplasmic vesicle. The catalysed reaction is [hyaluronan](n) + UDP-N-acetyl-alpha-D-glucosamine = N-acetyl-beta-D-glucosaminyl-(1-&gt;4)-[hyaluronan](n) + UDP + H(+). It carries out the reaction N-acetyl-beta-D-glucosaminyl-(1-&gt;4)-[hyaluronan](n) + UDP-alpha-D-glucuronate = [hyaluronan](n+1) + UDP + H(+). Its pathway is glycan biosynthesis; hyaluronan biosynthesis. Catalyzes the addition of GlcNAc or GlcUA monosaccharides to the nascent hyaluronan polymer. Therefore, it is essential to hyaluronan synthesis a major component of most extracellular matrices that has a structural role in tissues architectures and regulates cell adhesion, migration and differentiation. This is one of three isoenzymes responsible for cellular hyaluronan synthesis. This Mus musculus (Mouse) protein is Hyaluronan synthase 3 (Has3).